The primary structure comprises 245 residues: Actin-like protein 10 (245 aa).

Belongs to the actin family.

The protein is Actin-like protein 10 (ACTL10) of Homo sapiens (Human).